A 264-amino-acid chain; its full sequence is Thymidylate synthase (264 aa).

Residues R21 and 126-127 (RR) each bind dUMP. The active-site Nucleophile is the C146. DUMP-binding positions include 166-169 (RSAD), N177, and 207-209 (HLY). D169 contacts (6R)-5,10-methylene-5,6,7,8-tetrahydrofolate. A263 lines the (6R)-5,10-methylene-5,6,7,8-tetrahydrofolate pocket.

It belongs to the thymidylate synthase family. Bacterial-type ThyA subfamily. In terms of assembly, homodimer.

It localises to the cytoplasm. The catalysed reaction is dUMP + (6R)-5,10-methylene-5,6,7,8-tetrahydrofolate = 7,8-dihydrofolate + dTMP. Its pathway is pyrimidine metabolism; dTTP biosynthesis. Functionally, catalyzes the reductive methylation of 2'-deoxyuridine-5'-monophosphate (dUMP) to 2'-deoxythymidine-5'-monophosphate (dTMP) while utilizing 5,10-methylenetetrahydrofolate (mTHF) as the methyl donor and reductant in the reaction, yielding dihydrofolate (DHF) as a by-product. This enzymatic reaction provides an intracellular de novo source of dTMP, an essential precursor for DNA biosynthesis. The polypeptide is Thymidylate synthase (Rhodopseudomonas palustris (strain HaA2)).